Reading from the N-terminus, the 149-residue chain is Oligosaccharyltransferase complex subunit OSTC (149 aa).

The Cytoplasmic segment spans residues 1-32 (METLFRLPFAVLECPNIKLKRPGWVHMPSAMT). A helical transmembrane segment spans residues 33–53 (VYALVVVSYFLITGGIIYDVI). Residues 54 to 83 (VEPPSVGSMTDEHGHQRPVAFLAYRVNGQY) are Extracellular-facing. A helical transmembrane segment spans residues 84–104 (IMEGLASSFLFTMGGLGFIIL). At 105–117 (DRSNAPNIPKLNR) the chain is on the cytoplasmic side. A helical transmembrane segment spans residues 118–138 (FLLLFIGFVSVLLSFFMARVF). The Extracellular portion of the chain corresponds to 139-149 (MRMKLPGYLMG).

It belongs to the OSTC family. As to quaternary structure, specific component of the STT3A-containing form of the oligosaccharyltransferase (OST) complex.

Its subcellular location is the membrane. It participates in protein modification; protein glycosylation. Specific component of the STT3A-containing form of the oligosaccharyl transferase (OST) complex that catalyzes the initial transfer of a defined glycan (Glc(3)Man(9)GlcNAc(2) in eukaryotes) from the lipid carrier dolichol-pyrophosphate to an asparagine residue within an Asn-X-Ser/Thr consensus motif in nascent polypeptide chains, the first step in protein N-glycosylation. N-glycosylation occurs cotranslationally and the complex associates with the Sec61 complex at the channel-forming translocon complex that mediates protein translocation across the endoplasmic reticulum (ER). All subunits are required for a maximal enzyme activity. The chain is Oligosaccharyltransferase complex subunit OSTC from Gallus gallus (Chicken).